The sequence spans 667 residues: Leucine aminopeptidase 2 (667 aa).

Residues 188–190 and 318–323 each bind a peptide; these read QCQ and PYGGME. Residue His-347 coordinates Zn(2+). The Proton acceptor role is filled by Glu-348. His-351 and Glu-370 together coordinate Zn(2+). Catalysis depends on Tyr-436, which acts as the Proton donor.

It belongs to the peptidase M1 family. Requires Zn(2+) as cofactor.

The protein resides in the cytoplasm. The protein localises to the nucleus. It catalyses the reaction an epoxide + H2O = an ethanediol. In terms of biological role, aminopeptidase that preferentially cleaves di- and tripeptides. Also has low epoxide hydrolase activity (in vitro). Can hydrolyze the epoxide leukotriene LTA(4) but it forms preferentially 5,6-dihydroxy-7,9,11,14-eicosatetraenoic acid rather than the cytokine leukotriene B(4) as the product compared to the homologous mammalian enzyme (in vitro). The chain is Leucine aminopeptidase 2 (ara-1) from Neurospora crassa (strain ATCC 24698 / 74-OR23-1A / CBS 708.71 / DSM 1257 / FGSC 987).